The following is a 428-amino-acid chain: Histidine--tRNA ligase (428 aa).

It belongs to the class-II aminoacyl-tRNA synthetase family. Homodimer.

The protein resides in the cytoplasm. The enzyme catalyses tRNA(His) + L-histidine + ATP = L-histidyl-tRNA(His) + AMP + diphosphate + H(+). The protein is Histidine--tRNA ligase of Bordetella avium (strain 197N).